The primary structure comprises 443 residues: Tubulin beta-1 chain (443 aa).

Positions 11, 69, 138, 142, 143, 144, 204, and 226 each coordinate GTP. Glu69 is a Mg(2+) binding site. The interval 424 to 443 (QYQDATAEREGEYEEDYDEA) is disordered. A compositionally biased stretch (acidic residues) spans 434 to 443 (GEYEEDYDEA).

Belongs to the tubulin family. In terms of assembly, dimer of alpha and beta chains. A typical microtubule is a hollow water-filled tube with an outer diameter of 25 nm and an inner diameter of 15 nM. Alpha-beta heterodimers associate head-to-tail to form protofilaments running lengthwise along the microtubule wall with the beta-tubulin subunit facing the microtubule plus end conferring a structural polarity. Microtubules usually have 13 protofilaments but different protofilament numbers can be found in some organisms and specialized cells. It depends on Mg(2+) as a cofactor.

It is found in the cytoplasm. Its subcellular location is the cytoskeleton. Functionally, tubulin is the major constituent of microtubules, a cylinder consisting of laterally associated linear protofilaments composed of alpha- and beta-tubulin heterodimers. Microtubules grow by the addition of GTP-tubulin dimers to the microtubule end, where a stabilizing cap forms. Below the cap, tubulin dimers are in GDP-bound state, owing to GTPase activity of alpha-tubulin. This Anemia phyllitidis (Fern) protein is Tubulin beta-1 chain (TUBB1).